Here is a 475-residue protein sequence, read N- to C-terminus: uncharacterized protein (475 aa).

The protein to E.coli YihN.

This is an uncharacterized protein from Mycoplasma pneumoniae (strain ATCC 29342 / M129 / Subtype 1) (Mycoplasmoides pneumoniae).